Reading from the N-terminus, the 383-residue chain is Queuine tRNA-ribosyltransferase (383 aa).

The active-site Proton acceptor is the aspartate 89. Substrate is bound by residues 89–93 (DSGGF), aspartate 143, glutamine 187, and glycine 214. The interval 245 to 251 (GVGDLID) is RNA binding. Aspartate 264 acts as the Nucleophile in catalysis. The RNA binding; important for wobble base 34 recognition stretch occupies residues 269–273 (TRNAR). Positions 302, 304, 307, and 333 each coordinate Zn(2+).

The protein belongs to the queuine tRNA-ribosyltransferase family. Homodimer. Within each dimer, one monomer is responsible for RNA recognition and catalysis, while the other monomer binds to the replacement base PreQ1. It depends on Zn(2+) as a cofactor.

It catalyses the reaction 7-aminomethyl-7-carbaguanine + guanosine(34) in tRNA = 7-aminomethyl-7-carbaguanosine(34) in tRNA + guanine. It functions in the pathway tRNA modification; tRNA-queuosine biosynthesis. In terms of biological role, catalyzes the base-exchange of a guanine (G) residue with the queuine precursor 7-aminomethyl-7-deazaguanine (PreQ1) at position 34 (anticodon wobble position) in tRNAs with GU(N) anticodons (tRNA-Asp, -Asn, -His and -Tyr). Catalysis occurs through a double-displacement mechanism. The nucleophile active site attacks the C1' of nucleotide 34 to detach the guanine base from the RNA, forming a covalent enzyme-RNA intermediate. The proton acceptor active site deprotonates the incoming PreQ1, allowing a nucleophilic attack on the C1' of the ribose to form the product. After dissociation, two additional enzymatic reactions on the tRNA convert PreQ1 to queuine (Q), resulting in the hypermodified nucleoside queuosine (7-(((4,5-cis-dihydroxy-2-cyclopenten-1-yl)amino)methyl)-7-deazaguanosine). This is Queuine tRNA-ribosyltransferase from Thermodesulfovibrio yellowstonii (strain ATCC 51303 / DSM 11347 / YP87).